A 382-amino-acid chain; its full sequence is V-type proton ATPase subunit C 1 (382 aa).

Threonine 2 is modified (N-acetylthreonine).

The protein belongs to the V-ATPase C subunit family. As to quaternary structure, V-ATPase is a heteromultimeric enzyme made up of two complexes: the ATP-hydrolytic V1 complex and the proton translocation V0 complex. The V1 complex consists of three catalytic AB heterodimers that form a heterohexamer, three peripheral stalks each consisting of EG heterodimers, one central rotor including subunits D and F, and the regulatory subunits C and H. The proton translocation complex V0 consists of the proton transport subunit a, a ring of proteolipid subunits c9c'', rotary subunit d, subunits e and f, and the accessory subunits ATP6AP1/Ac45 and ATP6AP2/PRR. Expressed in brain (at protein level).

The protein localises to the cytoplasmic vesicle. The protein resides in the secretory vesicle. Its subcellular location is the synaptic vesicle membrane. It is found in the clathrin-coated vesicle membrane. Its function is as follows. Subunit of the V1 complex of vacuolar(H+)-ATPase (V-ATPase), a multisubunit enzyme composed of a peripheral complex (V1) that hydrolyzes ATP and a membrane integral complex (V0) that translocates protons. V-ATPase is responsible for acidifying and maintaining the pH of intracellular compartments and in some cell types, is targeted to the plasma membrane, where it is responsible for acidifying the extracellular environment. Subunit C is necessary for the assembly of the catalytic sector of the enzyme and is likely to have a specific function in its catalytic activity. The sequence is that of V-type proton ATPase subunit C 1 (ATP6V1C1) from Bos taurus (Bovine).